We begin with the raw amino-acid sequence, 333 residues long: Holliday junction branch migration complex subunit RuvB (333 aa).

The segment at 1–182 is large ATPase domain (RuvB-L); that stretch reads MDERLLSGES…FGVLSRLEYY (182 aa). ATP contacts are provided by residues L21, R22, G63, K66, T67, T68, 129 to 131, R172, Y182, and R219; that span reads EDF. Residue T67 coordinates Mg(2+). A small ATPAse domain (RuvB-S) region spans residues 183–253; sequence TVDQLSAIVE…ITQMALELLQ (71 aa). Residues 256 to 333 form a head domain (RuvB-H) region; that stretch reads KLGLDHIDHK…EHFGMEMPKV (78 aa). DNA is bound by residues R311 and R316.

This sequence belongs to the RuvB family. As to quaternary structure, homohexamer. Forms an RuvA(8)-RuvB(12)-Holliday junction (HJ) complex. HJ DNA is sandwiched between 2 RuvA tetramers; dsDNA enters through RuvA and exits via RuvB. An RuvB hexamer assembles on each DNA strand where it exits the tetramer. Each RuvB hexamer is contacted by two RuvA subunits (via domain III) on 2 adjacent RuvB subunits; this complex drives branch migration. In the full resolvosome a probable DNA-RuvA(4)-RuvB(12)-RuvC(2) complex forms which resolves the HJ.

The protein localises to the cytoplasm. It carries out the reaction ATP + H2O = ADP + phosphate + H(+). Its function is as follows. The RuvA-RuvB-RuvC complex processes Holliday junction (HJ) DNA during genetic recombination and DNA repair, while the RuvA-RuvB complex plays an important role in the rescue of blocked DNA replication forks via replication fork reversal (RFR). RuvA specifically binds to HJ cruciform DNA, conferring on it an open structure. The RuvB hexamer acts as an ATP-dependent pump, pulling dsDNA into and through the RuvAB complex. RuvB forms 2 homohexamers on either side of HJ DNA bound by 1 or 2 RuvA tetramers; 4 subunits per hexamer contact DNA at a time. Coordinated motions by a converter formed by DNA-disengaged RuvB subunits stimulates ATP hydrolysis and nucleotide exchange. Immobilization of the converter enables RuvB to convert the ATP-contained energy into a lever motion, pulling 2 nucleotides of DNA out of the RuvA tetramer per ATP hydrolyzed, thus driving DNA branch migration. The RuvB motors rotate together with the DNA substrate, which together with the progressing nucleotide cycle form the mechanistic basis for DNA recombination by continuous HJ branch migration. Branch migration allows RuvC to scan DNA until it finds its consensus sequence, where it cleaves and resolves cruciform DNA. The chain is Holliday junction branch migration complex subunit RuvB from Bacillus mycoides (strain KBAB4) (Bacillus weihenstephanensis).